We begin with the raw amino-acid sequence, 200 residues long: Holliday junction branch migration complex subunit RuvA (200 aa).

Positions 1 to 64 (MIAKLKGLLD…ENDMRLLGFA (64 aa)) are domain I. A domain II region spans residues 65–143 (EASERDWFRL…ALPSAPGGAA (79 aa)). Residues 144–154 (MAANPAGGASA) form a flexible linker region. The tract at residues 154 to 200 (ADAVSALENLGFKPAIAARAVATAQGELGEGASESELIRVALKRAAG) is domain III.

The protein belongs to the RuvA family. As to quaternary structure, homotetramer. Forms an RuvA(8)-RuvB(12)-Holliday junction (HJ) complex. HJ DNA is sandwiched between 2 RuvA tetramers; dsDNA enters through RuvA and exits via RuvB. An RuvB hexamer assembles on each DNA strand where it exits the tetramer. Each RuvB hexamer is contacted by two RuvA subunits (via domain III) on 2 adjacent RuvB subunits; this complex drives branch migration. In the full resolvosome a probable DNA-RuvA(4)-RuvB(12)-RuvC(2) complex forms which resolves the HJ.

Its subcellular location is the cytoplasm. In terms of biological role, the RuvA-RuvB-RuvC complex processes Holliday junction (HJ) DNA during genetic recombination and DNA repair, while the RuvA-RuvB complex plays an important role in the rescue of blocked DNA replication forks via replication fork reversal (RFR). RuvA specifically binds to HJ cruciform DNA, conferring on it an open structure. The RuvB hexamer acts as an ATP-dependent pump, pulling dsDNA into and through the RuvAB complex. HJ branch migration allows RuvC to scan DNA until it finds its consensus sequence, where it cleaves and resolves the cruciform DNA. This chain is Holliday junction branch migration complex subunit RuvA, found in Erythrobacter litoralis (strain HTCC2594).